A 105-amino-acid chain; its full sequence is Guanyl-specific ribonuclease Ms (105 aa).

2 disulfides stabilise this stretch: C3–C11 and C7–C102. Residue H39 is part of the active site. E57 functions as the Proton acceptor in the catalytic mechanism. Residue H91 is the Proton donor of the active site.

It belongs to the ribonuclease N1/T1 family.

It catalyses the reaction [RNA] containing guanosine + H2O = an [RNA fragment]-3'-guanosine-3'-phosphate + a 5'-hydroxy-ribonucleotide-3'-[RNA fragment].. The polypeptide is Guanyl-specific ribonuclease Ms (Aspergillus phoenicis (Aspergillus saitoi)).